The following is a 71-amino-acid chain: uncharacterized protein (71 aa).

A helical membrane pass occupies residues 12-32 (FLVSIAFFGLAPTIPLLAIAL).

The protein localises to the membrane. This is an uncharacterized protein from Sinorhizobium fredii (strain NBRC 101917 / NGR234).